The following is a 479-amino-acid chain: Aryl-phospho-beta-D-glucosidase BglA (479 aa).

Glu176 acts as the Proton donor in catalysis. Catalysis depends on Glu377, which acts as the Nucleophile.

The protein belongs to the glycosyl hydrolase 1 family.

The catalysed reaction is 6-phospho-beta-D-glucosyl-(1-&gt;4)-D-glucose + H2O = D-glucose 6-phosphate + D-glucose. Its function is as follows. Catalyzes the hydrolysis of aryl-phospho-beta-D-glucosides such as 4-methylumbelliferyl-phospho-beta-D-glucopyranoside (MUG-P), phosphoarbutin and phosphosalicin. Plays a major role in the utilization of arbutin or salicin as the sole carbon source. BglA and BglH are the major proteins contributing to hydrolysis of MUG-P by extracts of late-exponential-phase or stationary-phase B.subtilis cells. The chain is Aryl-phospho-beta-D-glucosidase BglA (bglA) from Bacillus subtilis (strain 168).